The primary structure comprises 349 residues: UDP-N-acetylenolpyruvoylglucosamine reductase (349 aa).

The 174-residue stretch at 24-197 folds into the FAD-binding PCMH-type domain; that stretch reads FGIDATARFA…VAVTFRLPKR (174 aa). Arg173 is a catalytic residue. Ser249 functions as the Proton donor in the catalytic mechanism. The active site involves Glu345.

Belongs to the MurB family. Requires FAD as cofactor.

Its subcellular location is the cytoplasm. The enzyme catalyses UDP-N-acetyl-alpha-D-muramate + NADP(+) = UDP-N-acetyl-3-O-(1-carboxyvinyl)-alpha-D-glucosamine + NADPH + H(+). It functions in the pathway cell wall biogenesis; peptidoglycan biosynthesis. Cell wall formation. In Burkholderia ambifaria (strain MC40-6), this protein is UDP-N-acetylenolpyruvoylglucosamine reductase.